Here is a 428-residue protein sequence, read N- to C-terminus: MPQIEELRRQRAGINEQIQALATIEATNGTLTAEQLTEFAGLQQQFTDISAKMDRMEATERAAALVAKPVKATQHGPAVIVKAEPKQYTGAGMTRMVMSIAAAQGNLQDAAKFASDELNDQSVSMAISTAAGSGGVLIPQNIHSEVIELLRDRTIVRKLGARSIPLPNGNMSLPRLAGGATASYTGENQDAKVSEARFDDVKLTAKTMIAMVPISNALIGRAGFNVEQLVLQDILTAISVREDKAFMRDDGTGDTPIGMKARATQWNRLLPWAADAAVNLDTIDTYLDSIILMSMDGNSNMISSGWGMSNRTYMKLFGLRDGNGNKVYPEMAQGMLKGYPIQRTSAIPANLGEGGKESEIYFADFNDVVIGEDGNMKVDFSKEASYIDTDGKLVSAFSRNQSLIRVVTEHDIGFRHPEGLVLGTGVLF.

A coiled-coil region spans residues 4–24 (IEELRRQRAGINEQIQALATI).

It belongs to the HK97 phage major capsid protein family. The scaffolding domain delta is cleaved by the viral protease and lost after assembly.

It localises to the virion. Functionally, major capsid protein that assembles to form an icosahedral capsid. The polypeptide is Major capsid protein (Klebsiella oxytoca (Bacteriophage phiKO2)).